We begin with the raw amino-acid sequence, 246 residues long: Putative protein phosphatase 2C-type (246 aa).

Residues K2–N240 form the PPM-type phosphatase domain. D36, G37, D192, and D231 together coordinate Mn(2+).

Mg(2+) is required as a cofactor. It depends on Mn(2+) as a cofactor.

It carries out the reaction O-phospho-L-seryl-[protein] + H2O = L-seryl-[protein] + phosphate. The enzyme catalyses O-phospho-L-threonyl-[protein] + H2O = L-threonyl-[protein] + phosphate. This is Putative protein phosphatase 2C-type from Streptococcus pyogenes serotype M6 (strain ATCC BAA-946 / MGAS10394).